A 127-amino-acid chain; its full sequence is Small ribosomal subunit protein uS11 (127 aa).

This sequence belongs to the universal ribosomal protein uS11 family. As to quaternary structure, part of the 30S ribosomal subunit. Interacts with proteins S7 and S18. Binds to IF-3.

In terms of biological role, located on the platform of the 30S subunit, it bridges several disparate RNA helices of the 16S rRNA. Forms part of the Shine-Dalgarno cleft in the 70S ribosome. The chain is Small ribosomal subunit protein uS11 from Ehrlichia ruminantium (strain Gardel).